Consider the following 261-residue polypeptide: CD40 ligand (261 aa).

Residues 1-22 (MIETYNQTSPRSAATGLPISMK) are Cytoplasmic-facing. Residues 23 to 46 (IFMYLLTVFLITQMIGSALFAVYL) form a helical; Signal-anchor for type II membrane protein membrane-spanning segment. Residues 47-261 (HRRLDKIEDE…GFTSFGLLKL (215 aa)) are Extracellular-facing. In terms of domain architecture, THD spans 122–261 (IAAHVISEAS…GFTSFGLLKL (140 aa)). A disulfide bridge connects residues Cys-178 and Cys-218. Asn-240 is a glycosylation site (N-linked (GlcNAc...) (complex) asparagine; alternate). N-linked (GlcNAc...) (high mannose) asparagine; alternate glycosylation occurs at Asn-240.

The protein belongs to the tumor necrosis factor family. As to quaternary structure, homotrimer. Interacts with isoform 3 of CD28. CD40 ligand, soluble form: Exists as either a monomer or a homotrimer. Forms a ternary complex between CD40 and integrins for CD40-CD40LG signaling. The soluble form derives from the membrane form by proteolytic processing. In terms of processing, N-linked glycan is a mixture of high mannose and complex type. Glycan structure does not influence binding affinity to CD40. Post-translationally, not O-glycosylated. In terms of tissue distribution, specifically expressed on activated CD4+ T-lymphocytes.

It localises to the cell membrane. The protein localises to the cell surface. It is found in the secreted. Functionally, cytokine that acts as a ligand to CD40/TNFRSF5. Costimulates T-cell proliferation and cytokine production. Its cross-linking on T-cells generates a costimulatory signal which enhances the production of IL4 and IL10 in conjunction with the TCR/CD3 ligation and CD28 costimulation. Induces the activation of NF-kappa-B. Induces the activation of kinases MAPK8 and PAK2 in T-cells. Induces tyrosine phosphorylation of isoform 3 of CD28. Mediates B-cell proliferation in the absence of co-stimulus as well as IgE production in the presence of IL4. Involved in immunoglobulin class switching. In terms of biological role, acts as a ligand for integrins, specifically ITGA5:ITGB1 and ITGAV:ITGB3; both integrins and the CD40 receptor are required for activation of CD40-CD40LG signaling, which have cell-type dependent effects, such as B-cell activation, NF-kappa-B signaling and anti-apoptotic signaling. The protein is CD40 ligand (CD40LG) of Homo sapiens (Human).